The chain runs to 437 residues: Vasoactive intestinal polypeptide receptor 2 (437 aa).

Positions 1–22 (MRASVVLTCYCWLLVRVSSIHP) are cleaved as a signal peptide. The Extracellular segment spans residues 23-123 (ECRFHLEIQE…EDESKITFYI (101 aa)). 3 disulfides stabilise this stretch: Cys37–Cys60, Cys51–Cys92, and Cys74–Cys108. Residues Asn57, Asn87, and Asn91 are each glycosylated (N-linked (GlcNAc...) asparagine). A helical membrane pass occupies residues 124-149 (LVKAIYTLGYSVSLMSLTTGSIIICL). The Cytoplasmic portion of the chain corresponds to 150-157 (FRKLHCTR). A helical transmembrane segment spans residues 158–179 (NYIHLNLFLSFMLRAISVLVKD). The Extracellular segment spans residues 180–202 (SVLYSSSGTLRCHDQPGSWVGCK). Cys201 and Cys270 are disulfide-bonded. A helical transmembrane segment spans residues 203-227 (LSLVFFQYCIMANFYWLLVEGLYLH). The Cytoplasmic segment spans residues 228 to 238 (TLLVAILPPSR). A helical membrane pass occupies residues 239–260 (CFLAYLLIGWGIPSVCIGAWIA). The Extracellular segment spans residues 261-279 (TRLSLEDTGCWDTNDHSIP). The chain crosses the membrane as a helical span at residues 280-303 (WWVIRMPILISIVVNFALFISIVR). At 304–324 (ILLQKLTSPDVGGNDQSQYKR) the chain is on the cytoplasmic side. A helical membrane pass occupies residues 325–345 (LAKSTLLLIPLFGVHYMVFAA). The Extracellular segment spans residues 346–353 (FPIGISST). The chain crosses the membrane as a helical span at residues 354–377 (YQILFELCVGSFQGLVVAVLYCFL). The Cytoplasmic portion of the chain corresponds to 378–437 (NSEVQCELKRRWRGLCLTQPGSRDYRLHSWSMSRNGSESALQIHRGSRTQSFLQSETSVI).

The protein belongs to the G-protein coupled receptor 2 family. In terms of assembly, interacts with ADCYAP1/PACAP (via N-terminal extracellular domain); activated by PACAP27 and CAPAC38 neuropeptides. Interacts with VIP; the interaction results in VIPR1 activation. As to expression, mainly in the thalamus, hippocampus and in the suprachiasmatic nucleus.

It localises to the cell membrane. Functionally, g protein-coupled receptor activated by the neuropeptides vasoactive intestinal peptide (VIP) and pituitary adenylate cyclase-activating polypeptide (ADCYAP1/PACAP). Binds VIP and both PACAP27 and PACAP38 bioactive peptides with the order of ligand affinity of VIP = PACAP38 &gt; PACAP27. Ligand binding causes a conformation change that triggers signaling via guanine nucleotide-binding proteins (G proteins) and modulates the activity of downstream effectors. Activates cAMP-dependent pathway. May be coupled to phospholipase C. The polypeptide is Vasoactive intestinal polypeptide receptor 2 (Rattus norvegicus (Rat)).